Reading from the N-terminus, the 846-residue chain is cGMP-dependent protein kinase (846 aa).

An autoinhibitory segment region spans residues M1 to D22. CNMP-binding domain regions lie at residues V51–S166, V169–G268, I288–N391, and I411–I510. 3',5'-cyclic GMP contacts are provided by K106, G115, E116, A118, R125, and S126. The 3',5'-cyclic GMP site is built by R466, G475, E476, A478, R485, and T486. Residues L534–F791 form the Protein kinase domain. ATP contacts are provided by residues I540–V548 and K563. D657 (proton acceptor) is an active-site residue. The 55-residue stretch at G792–F846 folds into the AGC-kinase C-terminal domain. Positions I824–F846 are disordered. The segment covering E825–F846 has biased composition (acidic residues).

The protein belongs to the protein kinase superfamily. AGC Ser/Thr protein kinase family. cGMP subfamily. As to quaternary structure, monomer. Mg(2+) serves as cofactor. Autophosphorylated.

The protein resides in the cytoplasm. The protein localises to the endoplasmic reticulum membrane. It carries out the reaction L-seryl-[protein] + ATP = O-phospho-L-seryl-[protein] + ADP + H(+). The catalysed reaction is L-threonyl-[protein] + ATP = O-phospho-L-threonyl-[protein] + ADP + H(+). Its activity is regulated as follows. Activated by cGMP. Not activated by cAMP. cGMP binding allosterically triggers a conformational change at the alpha C-helix of cGMP-binding domain 4, which bridges the regulatory and catalytic domains, causing the capping triad, composed of Arg-477, Gln-525 and Asp-526, to form and stabilize the active conformation. The cGMP-binding domains acts cooperatively to activate PKG. Serine/threonine protein kinase which acts as a downstream effector of the second messenger cGMP. Controls the release of Ca(2+) from intracellular stores by regulating phosphoinositide biosynthesis. Ca(2+) signals are essential for merozoite and sporozoite invasion and egress from host hepatocytes and erythrocytes, and, in the mosquito vector, for gametocyte activation, and ookinete and sporozoite motility. During the host liver stage, regulates the initial invasion of host hepatocytes by sporozoites by regulating sporozoite motility and microneme exocytosis. Following parasite development in the hepatocytes, required for the release of merosomes, a vesicle containing the mature merozoites. During the asexual blood stage, required for the progression from schizont to the ring stage following merozoite invasion of host erythrocytes and for merozoite egress. Regulates merozoite egress by promoting the release of exonemes and micronemes which contain proteins essential for egress. Phosphorylates CDPK1 predominantly at the late schizont stage; phosphorylation at 'Ser-64' regulates CDPK1 protein-protein interaction and phosphorylation at 'Thr-231' may regulate CDPK1 kinase activity. In the mosquito vector, required for the initiation of gametogenesis induced by xanthurenic acid, specifically the gametocyte differentiation from the crescent-shaped form to the spherical form. Required for the gliding motility of ookinetes to reach and penetrate the midgut epithelium by promoting Ca(2+)-mediated activation of CDPK1 and CDPK4. Also required for microneme secretion in ookinete by promoting Ca(2+)-mediated activation of CDPK3. The protein is cGMP-dependent protein kinase of Plasmodium vivax (strain Salvador I).